The chain runs to 131 residues: Small ribosomal subunit protein uS11 (131 aa).

Belongs to the universal ribosomal protein uS11 family. As to quaternary structure, part of the 30S ribosomal subunit. Interacts with proteins S7 and S18. Binds to IF-3.

Located on the platform of the 30S subunit, it bridges several disparate RNA helices of the 16S rRNA. Forms part of the Shine-Dalgarno cleft in the 70S ribosome. The protein is Small ribosomal subunit protein uS11 of Trichodesmium erythraeum (strain IMS101).